The sequence spans 244 residues: MKGKLSIALMLSVCFSASATDSVHWGYEGNGDPAHWGKLSPDFSLCETGKNQSPINIRQALNAQHDPLQLAFQSGTQQIINNGHTIQVNVSPGNTLLLDNETFTLQQFHFHAPSENEIDGKQFPLEGHFVYKNADGALTVIALMFQEGAANPQLATAWQQIPARVDQAEDVRTPVAIQALLPTSLNYYRFSGSLTTPPCSEGIRWLVLDHPVTASAEQISQFSSVMHHANNRPIQPLNGRIIIH.

A signal peptide spans 1 to 19; that stretch reads MKGKLSIALMLSVCFSASA. Residues 23-244 enclose the Alpha-carbonic anhydrase domain; that stretch reads VHWGYEGNGD…QPLNGRIIIH (222 aa). A disulfide bridge links C46 with C199. The active-site Proton acceptor is H84. Positions 109, 111, and 128 each coordinate Zn(2+). 195-196 contributes to the substrate binding site; sequence TT.

Belongs to the alpha-carbonic anhydrase family. Requires Zn(2+) as cofactor.

The protein localises to the periplasm. The enzyme catalyses hydrogencarbonate + H(+) = CO2 + H2O. Functionally, reversible hydration of carbon dioxide. The sequence is that of Carbonic anhydrase (cah) from Pectobacterium carotovorum (Erwinia carotovora).